A 321-amino-acid polypeptide reads, in one-letter code: Porin Omp2a (321 aa).

Residues 1–22 (MNIKSLLLGSAAALVAASGAQA) form the signal peptide.

The protein belongs to the alphaproteobacteria porin family. In terms of assembly, monomer.

The protein localises to the cell outer membrane. Forms passive diffusion pores that allow small molecular weight hydrophilic materials across the outer membrane. This Brucella abortus (strain S19) protein is Porin Omp2a (omp2a).